The sequence spans 882 residues: Alanine--tRNA ligase (882 aa).

Zn(2+) is bound by residues His568, His572, Cys670, and His674.

It belongs to the class-II aminoacyl-tRNA synthetase family. Zn(2+) is required as a cofactor.

The protein localises to the cytoplasm. It catalyses the reaction tRNA(Ala) + L-alanine + ATP = L-alanyl-tRNA(Ala) + AMP + diphosphate. Catalyzes the attachment of alanine to tRNA(Ala) in a two-step reaction: alanine is first activated by ATP to form Ala-AMP and then transferred to the acceptor end of tRNA(Ala). Also edits incorrectly charged Ser-tRNA(Ala) and Gly-tRNA(Ala) via its editing domain. In Syntrophotalea carbinolica (strain DSM 2380 / NBRC 103641 / GraBd1) (Pelobacter carbinolicus), this protein is Alanine--tRNA ligase.